The following is a 324-amino-acid chain: Chlorophyllase-1 (324 aa).

The GXSXG motif lies at Gly136–Gly140. Catalysis depends on Ser138, which acts as the Nucleophile. Catalysis depends on charge relay system residues Asp168 and His243.

This sequence belongs to the AB hydrolase superfamily. Lipase family. In terms of tissue distribution, expressed in seedlings, leaves, flowers and siliques, but not in roots.

It is found in the cytoplasm. The protein localises to the cytosol. The catalysed reaction is a chlorophyll + H2O = a chlorophyllide + phytol + H(+). It catalyses the reaction chlorophyll a + H2O = phytol + chlorophyllide a + H(+). It functions in the pathway porphyrin-containing compound metabolism; chlorophyll degradation. Its function is as follows. Catalyzes the hydrolysis of ester bond in chlorophyll to yield chlorophyllide and phytol. Shows a preferential activity toward chlorophyll a. Does not seem to be required for chlorophyll degradation during senescence. May modulate the balance between different plant defense pathways. The protein is Chlorophyllase-1 of Arabidopsis thaliana (Mouse-ear cress).